The following is a 359-amino-acid chain: NF-kappa-B inhibitor beta (359 aa).

Phosphoserine; by RPS6KA1 is present on residues S19 and S23. 6 ANK repeats span residues 57 to 86 (DGDTALHLAVIHQHEPFLDFLLGFSAGTEY), 93 to 122 (LGQTALHLAAILGEASTVEKLYAAGAGVLV), 126 to 155 (GGHTALHLACRVRAHTCAYVLLQPRPSHPR), 206 to 235 (DGHTPLHVAVIHKDAEMVQLLRDAGADLNK), 240 to 269 (CGRTPLHLAVEGQAAGVLALLLKAGADPTA), and 273 to 302 (GGRTPLGSALLRPNPVLARLLRAHGAPEPE). The segment at 153–192 (HPRDASDTYLTQSQDHTPDTSHAPVATDPQPNPGNEEELR) is disordered. Over residues 298–308 (APEPEDKDDKL) the composition is skewed to basic and acidic residues. Positions 298 to 359 (APEPEDKDDK…KPLPDDPNPA (62 aa)) are disordered. Residue S318 is modified to Phosphoserine. Positions 318 to 331 (SDSDNRDEGDEYDD) are enriched in acidic residues. Pro residues predominate over residues 342-359 (QPPPSPAAKPLPDDPNPA).

This sequence belongs to the NF-kappa-B inhibitor family. As to quaternary structure, interacts with THRB (via ligand-binding domain). Interacts with RELA and REL. Interacts with COMMD1. Interacts with inhibitor kappa B-interacting Ras-like NKIRAS1 and NKIRAS2. Post-translationally, phosphorylated by RPS6KA1; followed by degradation. Interaction with NKIRAS1 and NKIRAS2 probably prevents phosphorylation.

Its subcellular location is the cytoplasm. The protein localises to the nucleus. Inhibits NF-kappa-B by complexing with and trapping it in the cytoplasm. However, the unphosphorylated form resynthesized after cell stimulation is able to bind NF-kappa-B allowing its transport to the nucleus and protecting it to further NFKBIA-dependent inactivation. Association with inhibitor kappa B-interacting NKIRAS1 and NKIRAS2 prevent its phosphorylation rendering it more resistant to degradation, explaining its slower degradation. The polypeptide is NF-kappa-B inhibitor beta (Nfkbib) (Rattus norvegicus (Rat)).